We begin with the raw amino-acid sequence, 410 residues long: Riboflavin biosynthesis protein RibBA (410 aa).

The segment at 1-205 (MENKRIDTIE…IKDLVAFQMR (205 aa)) is DHBP synthase. D-ribulose 5-phosphate contacts are provided by residues 30-31 (RE), Asp35, 144-148 (RVGHT), and Glu168. Residue Glu31 participates in Mg(2+) binding. A Mg(2+)-binding site is contributed by His147. Residues 206-410 (RSKLVQRAVE…ISCSCGSGNH (205 aa)) are GTP cyclohydrolase II. 256-260 (RVHSQ) is a GTP binding site. Residues Cys261, Cys272, and Cys274 each contribute to the Zn(2+) site. Residues Gln277, 299-301 (EGR), and Thr321 each bind GTP. The active-site Proton acceptor; for GTP cyclohydrolase activity is the Asp333. Residue Arg335 is the Nucleophile; for GTP cyclohydrolase activity of the active site. Thr356 and Lys361 together coordinate GTP.

In the N-terminal section; belongs to the DHBP synthase family. The protein in the C-terminal section; belongs to the GTP cyclohydrolase II family. The cofactor is Mg(2+). It depends on Mn(2+) as a cofactor. Requires Zn(2+) as cofactor.

The enzyme catalyses D-ribulose 5-phosphate = (2S)-2-hydroxy-3-oxobutyl phosphate + formate + H(+). The catalysed reaction is GTP + 4 H2O = 2,5-diamino-6-hydroxy-4-(5-phosphoribosylamino)-pyrimidine + formate + 2 phosphate + 3 H(+). It functions in the pathway cofactor biosynthesis; riboflavin biosynthesis; 2-hydroxy-3-oxobutyl phosphate from D-ribulose 5-phosphate: step 1/1. The protein operates within cofactor biosynthesis; riboflavin biosynthesis; 5-amino-6-(D-ribitylamino)uracil from GTP: step 1/4. Its function is as follows. Catalyzes the conversion of D-ribulose 5-phosphate to formate and 3,4-dihydroxy-2-butanone 4-phosphate. In terms of biological role, catalyzes the conversion of GTP to 2,5-diamino-6-ribosylamino-4(3H)-pyrimidinone 5'-phosphate (DARP), formate and pyrophosphate. This chain is Riboflavin biosynthesis protein RibBA, found in Chlorobium phaeovibrioides (strain DSM 265 / 1930) (Prosthecochloris vibrioformis (strain DSM 265)).